The chain runs to 217 residues: 3-isopropylmalate dehydratase small subunit (217 aa).

It belongs to the LeuD family. LeuD type 1 subfamily. In terms of assembly, heterodimer of LeuC and LeuD.

It catalyses the reaction (2R,3S)-3-isopropylmalate = (2S)-2-isopropylmalate. It functions in the pathway amino-acid biosynthesis; L-leucine biosynthesis; L-leucine from 3-methyl-2-oxobutanoate: step 2/4. Functionally, catalyzes the isomerization between 2-isopropylmalate and 3-isopropylmalate, via the formation of 2-isopropylmaleate. This chain is 3-isopropylmalate dehydratase small subunit, found in Paracidovorax citrulli (strain AAC00-1) (Acidovorax citrulli).